A 236-amino-acid chain; its full sequence is Peroxisomal membrane protein 11D (236 aa).

G2 carries the N-acetylglycine modification. At 2–92 the chain is on the cytoplasmic side; the sequence is GTTLDVSRAE…LPLVLLGKSK (91 aa). A helical membrane pass occupies residues 93–109; that stretch reads NALLSTFLFLDQIVWLG. Over 110–207 the chain is Lumenal; sequence RSGIYKNKER…LLQLAPTKIT (98 aa). The helical transmembrane segment at 208-227 threads the bilayer; it reads PRVTGAFGFITSIISCYQLL. Over 228-236 the chain is Cytoplasmic; sequence PTRPKIKTP.

It belongs to the peroxin-11 family. Homooligomer. Interacts with ARC5 and FIS1B on peroxisomes. In terms of tissue distribution, expressed in developing siliques.

It is found in the peroxisome membrane. Its function is as follows. Involved in peroxisomal proliferation. Promotes peroxisomal duplication, aggregation or elongation without fission. This Arabidopsis thaliana (Mouse-ear cress) protein is Peroxisomal membrane protein 11D (PEX11D).